A 544-amino-acid polypeptide reads, in one-letter code: Chaperonin GroEL 4 (544 aa).

ATP contacts are provided by residues 30 to 33 (TLGP), Lys51, 87 to 91 (DGTTT), Gly415, and Asp496.

It belongs to the chaperonin (HSP60) family. As to quaternary structure, forms a cylinder of 14 subunits composed of two heptameric rings stacked back-to-back. Interacts with the co-chaperonin GroES.

It localises to the cytoplasm. The enzyme catalyses ATP + H2O + a folded polypeptide = ADP + phosphate + an unfolded polypeptide.. In terms of biological role, together with its co-chaperonin GroES, plays an essential role in assisting protein folding. The GroEL-GroES system forms a nano-cage that allows encapsulation of the non-native substrate proteins and provides a physical environment optimized to promote and accelerate protein folding. This Sinorhizobium medicae (strain WSM419) (Ensifer medicae) protein is Chaperonin GroEL 4.